The chain runs to 130 residues: Small ribosomal subunit protein uS9 (130 aa).

The protein belongs to the universal ribosomal protein uS9 family.

In Onion yellows phytoplasma (strain OY-M), this protein is Small ribosomal subunit protein uS9.